The chain runs to 367 residues: Popeye domain-containing protein 2 (367 aa).

Asparagine 4 carries N-linked (GlcNAc...) asparagine glycosylation. Transmembrane regions (helical) follow at residues 36-56 and 77-97; these read FLLM…LFGI and IVLW…QLVY. 2 disordered regions span residues 273–292 and 312–367; these read PSAS…ALEA and APPA…TPEL. Over residues 278–290 the composition is skewed to acidic residues; the sequence is GEPESEKDDEEAL. The span at 344 to 356 shows a compositional bias: polar residues; it reads PLQNSSQVMSRSQ. Asparagine 347 carries N-linked (GlcNAc...) asparagine glycosylation. Threonine 364 is modified (phosphothreonine).

The protein belongs to the popeye family. In terms of tissue distribution, expressed in the developing and adult heart, with high expression levels in the sinus and atrioventricular nodes. Also expressed in the bladder and skeletal muscle.

It localises to the membrane. The protein localises to the cell membrane. The protein resides in the sarcolemma. Important for the maintenance of cardiac function. Plays a regulatory function in heart rate dynamics mediated, at least in part, through cAMP-binding and, probably, by increasing cell surface expression of the potassium channel KCNK2 and enhancing current density. This Mus musculus (Mouse) protein is Popeye domain-containing protein 2 (Popdc2).